We begin with the raw amino-acid sequence, 508 residues long: MSWHVQNENFILDSTRIFMKAFHLLLFDGSLIFPECILIFGLILLLMIDSTSDQKERPWLYFISSTSLVMSITALLFRWREEPMISFSGNFQTNNFNEIFQFLILLCSTLCIPLSVEYIECTEMAITEFLLFVLTATLGGMFLCGANDFITIFVAPECFSLCSYLLSGYTKKDVRSNEATMKYLLMGGASSSILVHGFSWLYGLSGGEIELQEIVNGLINTQMYNSPGISIALIFITVGIGFKLSPAPSHQWTPDVYEGSPTPVVAFLSVTSKVAASASATRIFDIPFYFSSNEWHLLLEILAILSMILGNLIAITQTSMKRMLAYSSIGQIGYVIIGIIVGDSNDGYASMITYMLFYISMNLGAFACIVLFGLRTGTDNIRDYAGLYTKDPFLALSLALCLLSLGGLPPLAGFFGKLYLFWCGWQAGLYFLVFIGLLTSVVSIYYYLKIIKLLMTGRNQAITPHVRNYRRSPSNNSIELSMIVCVIASTIPGISMNPIIAIAQDTLF.

The next 13 helical transmembrane spans lie at Leu24–Leu44, Trp59–Trp79, Ile99–Ile119, Met124–Cys144, Phe149–Tyr169, Leu184–Leu204, Pro227–Ala247, Trp295–Ile315, Met323–Asp343, Tyr354–Leu374, Ala395–Phe415, Leu418–Leu438, and Met482–Ile502.

Belongs to the complex I subunit 2 family. As to quaternary structure, NDH is composed of at least 16 different subunits, 5 of which are encoded in the nucleus.

The protein localises to the plastid. It localises to the chloroplast thylakoid membrane. It catalyses the reaction a plastoquinone + NADH + (n+1) H(+)(in) = a plastoquinol + NAD(+) + n H(+)(out). It carries out the reaction a plastoquinone + NADPH + (n+1) H(+)(in) = a plastoquinol + NADP(+) + n H(+)(out). In terms of biological role, NDH shuttles electrons from NAD(P)H:plastoquinone, via FMN and iron-sulfur (Fe-S) centers, to quinones in the photosynthetic chain and possibly in a chloroplast respiratory chain. The immediate electron acceptor for the enzyme in this species is believed to be plastoquinone. Couples the redox reaction to proton translocation, and thus conserves the redox energy in a proton gradient. This Ipomoea purpurea (Common morning glory) protein is NAD(P)H-quinone oxidoreductase subunit 2 B, chloroplastic.